The primary structure comprises 521 residues: Medium/long-chain-fatty-acid--[acyl-carrier-protein] ligase MbtM (521 aa).

Positions 146–172 (RRCPEPPAPHANPAILQGTAGSTGTPK) are disordered.

Belongs to the ATP-dependent AMP-binding enzyme family.

The enzyme catalyses a long-chain fatty acid + holo-[ACP] + ATP = a long-chain fatty acyl-[ACP] + AMP + diphosphate. The catalysed reaction is a medium-chain fatty acid + holo-[ACP] + ATP = a medium-chain fatty acyl-[ACP] + AMP + diphosphate. Its pathway is siderophore biosynthesis; mycobactin biosynthesis. Its function is as follows. Activates lipidic moieties required for mycobactin biosynthesis. Converts medium- to long-chain aliphatic fatty acids into acyl adenylate, which is further transferred on to the phosphopantetheine arm of the carrier protein MbtL. In Mycolicibacterium paratuberculosis (strain ATCC BAA-968 / K-10) (Mycobacterium paratuberculosis), this protein is Medium/long-chain-fatty-acid--[acyl-carrier-protein] ligase MbtM (mbtM).